We begin with the raw amino-acid sequence, 325 residues long: 8-oxo-dGDP phosphatase NUDT18 (325 aa).

A Nudix hydrolase domain is found at 38–163 (NVCYIVGAVI…DILSLIDAGL (126 aa)). Residue L55 coordinates Mg(2+). Residues 73–94 (GRMEECESILEALQREVREEAG) carry the Nudix box motif.

Belongs to the Nudix hydrolase family. Requires Mn(2+) as cofactor. Mg(2+) serves as cofactor.

It catalyses the reaction 8-oxo-dGDP + H2O = 8-oxo-dGMP + phosphate + H(+). It carries out the reaction 8-oxo-dADP + H2O = 8-oxo-dAMP + phosphate + H(+). The catalysed reaction is 2-oxo-dADP + H2O = 2-oxo-dAMP + phosphate + H(+). The enzyme catalyses 8-oxo-GDP + H2O = 8-oxo-GMP + phosphate + H(+). Mediates the hydrolysis of oxidized nucleoside diphosphate derivatives. Hydrolyzes 8-oxo-7,8-dihydroguanine (8-oxo-Gua)-containing deoxyribo- and ribonucleoside diphosphates to the monophosphates. Hydrolyzes 8-oxo-dGDP and 8-oxo-GDP with the same efficiencies. Also hydrolyzes 8-OH-dADP and 2-OH-dADP. Exhibited no or minimal hydrolysis activity against 8-oxo-dGTP, 8-oxo-GTP, dGTP, GTP, dGDP and GDP. Probably removes oxidized guanine nucleotides from both the DNA and RNA precursor pools. In Danio rerio (Zebrafish), this protein is 8-oxo-dGDP phosphatase NUDT18 (nudt18).